A 206-amino-acid polypeptide reads, in one-letter code: Large ribosomal subunit protein uL4 (206 aa).

It belongs to the universal ribosomal protein uL4 family. As to quaternary structure, part of the 50S ribosomal subunit.

Its function is as follows. One of the primary rRNA binding proteins, this protein initially binds near the 5'-end of the 23S rRNA. It is important during the early stages of 50S assembly. It makes multiple contacts with different domains of the 23S rRNA in the assembled 50S subunit and ribosome. Forms part of the polypeptide exit tunnel. The sequence is that of Large ribosomal subunit protein uL4 from Bradyrhizobium sp. (strain BTAi1 / ATCC BAA-1182).